A 426-amino-acid polypeptide reads, in one-letter code: Chordin-like protein 2 (426 aa).

The signal sequence occupies residues methionine 1 to alanine 25. VWFC domains are found at residues lysine 31–valine 96 and lysine 109–lysine 175. N-linked (GlcNAc...) asparagine glycosylation occurs at asparagine 114. Serine 182 bears the Phosphoserine mark. A compositionally biased stretch (polar residues) spans serine 182–glutamine 191. Residues serine 182–serine 216 form a disordered region. Asparagine 186 carries an N-linked (GlcNAc...) asparagine glycan. Over residues histidine 192–glycine 206 the composition is skewed to basic and acidic residues. A compositionally biased stretch (low complexity) spans proline 207–serine 216. Positions lysine 246–proline 311 constitute a VWFC 3 domain.

Interacts with GDF5. May interact with INHBA, BMP2, BMP4, BMP5, BMP6, and BMP7. In terms of tissue distribution, weakly expressed in the liver and kidney. In reproductive organs expressed in connective tissues such as ligaments of the ovary and oviduct in females, and of testis, epididymis and certain male accessory sex glands in males. Expression was high in uterine myometrium. Weakly expressed in cartilage of the femoral head, patella, articular facets of vertebrae, in the annulus fibrosus of intervertebral disks. In normal cartilage, expression was confined to articular chondrocytes especially in the superficial zone.

It is found in the secreted. Functionally, implicated in tumor angiogenesis. May inhibits BMPs activity by blocking their interaction with their receptors. Has a negative regulator effect on the cartilage formation/regeneration from immature mesenchymal cells, by preventing or reducing the rate of matrix accumulation. May play a role during myoblast and osteoblast differentiation, and maturation. The protein is Chordin-like protein 2 (Chrdl2) of Mus musculus (Mouse).